The following is a 253-amino-acid chain: Ribonuclease HII (253 aa).

The region spanning 70–253 (PLVAGIDEVG…RSFSPVQNAL (184 aa)) is the RNase H type-2 domain. Positions 76, 77, and 168 each coordinate a divalent metal cation.

This sequence belongs to the RNase HII family. Requires Mn(2+) as cofactor. It depends on Mg(2+) as a cofactor.

The protein localises to the cytoplasm. The catalysed reaction is Endonucleolytic cleavage to 5'-phosphomonoester.. Endonuclease that specifically degrades the RNA of RNA-DNA hybrids. This Latilactobacillus sakei subsp. sakei (strain 23K) (Lactobacillus sakei subsp. sakei) protein is Ribonuclease HII.